Reading from the N-terminus, the 220-residue chain is Small ribosomal subunit protein uS3 (220 aa).

Residues 39–107 (IREHVEGRLK…RVHINISEIK (69 aa)) enclose the KH type-2 domain.

It belongs to the universal ribosomal protein uS3 family. As to quaternary structure, part of the 30S ribosomal subunit. Forms a tight complex with proteins S10 and S14.

Functionally, binds the lower part of the 30S subunit head. Binds mRNA in the 70S ribosome, positioning it for translation. The sequence is that of Small ribosomal subunit protein uS3 from Shouchella clausii (strain KSM-K16) (Alkalihalobacillus clausii).